We begin with the raw amino-acid sequence, 342 residues long: Thiosulfate/3-mercaptopyruvate sulfurtransferase 2 (342 aa).

Rhodanese domains follow at residues 56–173 (GDAD…DVES) and 224–338 (EDKT…LPIV). Cys-298 acts as the Cysteine persulfide intermediate in catalysis.

In terms of tissue distribution, expressed in roots, rosette and cauline leaves, stems, flowers and siliques.

The protein localises to the cytoplasm. It catalyses the reaction thiosulfate + hydrogen cyanide = thiocyanate + sulfite + 2 H(+). It carries out the reaction 2-oxo-3-sulfanylpropanoate + [thioredoxin]-dithiol = [thioredoxin]-disulfide + hydrogen sulfide + pyruvate + H(+). Functionally, catalyzes the transfer of a sulfur ion from a donor to cyanide or to other thiol compounds. Substrate preference is 3-mercaptopyruvate &gt; thiosulfate. Involved in embryo and seed development. The sequence is that of Thiosulfate/3-mercaptopyruvate sulfurtransferase 2 (STR2) from Arabidopsis thaliana (Mouse-ear cress).